The following is a 372-amino-acid chain: Putative 8-amino-7-oxononanoate synthase (372 aa).

Residue Arg-20 coordinates substrate. 94–95 provides a ligand contact to pyridoxal 5'-phosphate; the sequence is GY. Position 119 (His-119) interacts with substrate. Pyridoxal 5'-phosphate-binding positions include Ser-167, 192–195, and 223–226; these read DDAH and TLSK. Lys-226 is subject to N6-(pyridoxal phosphate)lysine. Thr-337 contacts substrate.

It belongs to the class-II pyridoxal-phosphate-dependent aminotransferase family. BioF subfamily. Homodimer. Requires pyridoxal 5'-phosphate as cofactor.

The catalysed reaction is 6-carboxyhexanoyl-[ACP] + L-alanine + H(+) = (8S)-8-amino-7-oxononanoate + holo-[ACP] + CO2. It participates in cofactor biosynthesis; biotin biosynthesis. Catalyzes the decarboxylative condensation of pimeloyl-[acyl-carrier protein] and L-alanine to produce 8-amino-7-oxononanoate (AON), [acyl-carrier protein], and carbon dioxide. This Methanocaldococcus jannaschii (strain ATCC 43067 / DSM 2661 / JAL-1 / JCM 10045 / NBRC 100440) (Methanococcus jannaschii) protein is Putative 8-amino-7-oxononanoate synthase (bioF).